The primary structure comprises 424 residues: Glutamyl-tRNA reductase (424 aa).

Substrate contacts are provided by residues 49–52, Ser107, 112–114, and Gln118; these read TCNR and EPQ. Cys50 functions as the Nucleophile in the catalytic mechanism. 187-192 provides a ligand contact to NADP(+); it reads GAGETI.

This sequence belongs to the glutamyl-tRNA reductase family. Homodimer.

The enzyme catalyses (S)-4-amino-5-oxopentanoate + tRNA(Glu) + NADP(+) = L-glutamyl-tRNA(Glu) + NADPH + H(+). It participates in porphyrin-containing compound metabolism; protoporphyrin-IX biosynthesis; 5-aminolevulinate from L-glutamyl-tRNA(Glu): step 1/2. Its function is as follows. Catalyzes the NADPH-dependent reduction of glutamyl-tRNA(Glu) to glutamate 1-semialdehyde (GSA). The protein is Glutamyl-tRNA reductase of Pseudomonas fluorescens (strain ATCC BAA-477 / NRRL B-23932 / Pf-5).